The primary structure comprises 350 residues: tRNA uridine(34) hydroxylase (350 aa).

In terms of domain architecture, Rhodanese spans 146–240; sequence DDPDAVFIDM…YARRARAQGL (95 aa). Cysteine 200 serves as the catalytic Cysteine persulfide intermediate. Positions 319–328 are enriched in basic and acidic residues; it reads RRRRAGRENG. The interval 319-350 is disordered; that stretch reads RRRRAGRENGNKIFNKSRGRLNSKLSIPDPAE.

Belongs to the TrhO family.

The enzyme catalyses uridine(34) in tRNA + AH2 + O2 = 5-hydroxyuridine(34) in tRNA + A + H2O. Its function is as follows. Catalyzes oxygen-dependent 5-hydroxyuridine (ho5U) modification at position 34 in tRNAs. The protein is tRNA uridine(34) hydroxylase of Salmonella newport (strain SL254).